A 403-amino-acid chain; its full sequence is S-adenosylmethionine synthase (403 aa).

ATP is bound at residue His16. Asp18 provides a ligand contact to Mg(2+). Glu44 is a K(+) binding site. L-methionine-binding residues include Glu57 and Gln100. Positions 100 to 110 (QSSDIAQGVDR) are flexible loop. Residues 165 to 167 (DAK), Asp242, 248 to 249 (RK), Ala265, and Lys269 contribute to the ATP site. Asp242 serves as a coordination point for L-methionine. Residue Lys273 coordinates L-methionine.

It belongs to the AdoMet synthase family. As to quaternary structure, homotetramer; dimer of dimers. Mg(2+) serves as cofactor. It depends on K(+) as a cofactor.

It localises to the cytoplasm. It catalyses the reaction L-methionine + ATP + H2O = S-adenosyl-L-methionine + phosphate + diphosphate. It participates in amino-acid biosynthesis; S-adenosyl-L-methionine biosynthesis; S-adenosyl-L-methionine from L-methionine: step 1/1. In terms of biological role, catalyzes the formation of S-adenosylmethionine (AdoMet) from methionine and ATP. The overall synthetic reaction is composed of two sequential steps, AdoMet formation and the subsequent tripolyphosphate hydrolysis which occurs prior to release of AdoMet from the enzyme. The chain is S-adenosylmethionine synthase from Nitrosococcus oceani (strain ATCC 19707 / BCRC 17464 / JCM 30415 / NCIMB 11848 / C-107).